Consider the following 333-residue polypeptide: Protoheme IX farnesyltransferase (333 aa).

Helical transmembrane passes span 36 to 56 (LIPL…GWPL), 61 to 81 (LVCT…LNCL), 107 to 127 (AAFA…VSGV), 130 to 150 (LAAG…TALL), 158 to 178 (IVIG…AATG), 186 to 206 (WLFA…ALLL), 243 to 263 (FLGV…LLPF), and 284 to 304 (AKGL…LLVF).

The protein belongs to the UbiA prenyltransferase family. Protoheme IX farnesyltransferase subfamily.

Its subcellular location is the cell inner membrane. It catalyses the reaction heme b + (2E,6E)-farnesyl diphosphate + H2O = Fe(II)-heme o + diphosphate. It participates in porphyrin-containing compound metabolism; heme O biosynthesis; heme O from protoheme: step 1/1. In terms of biological role, converts heme B (protoheme IX) to heme O by substitution of the vinyl group on carbon 2 of heme B porphyrin ring with a hydroxyethyl farnesyl side group. The chain is Protoheme IX farnesyltransferase from Synechococcus sp. (strain WH7803).